Consider the following 194-residue polypeptide: Imidazoleglycerol-phosphate dehydratase (194 aa).

It belongs to the imidazoleglycerol-phosphate dehydratase family.

It is found in the cytoplasm. It carries out the reaction D-erythro-1-(imidazol-4-yl)glycerol 3-phosphate = 3-(imidazol-4-yl)-2-oxopropyl phosphate + H2O. Its pathway is amino-acid biosynthesis; L-histidine biosynthesis; L-histidine from 5-phospho-alpha-D-ribose 1-diphosphate: step 6/9. This Halalkalibacterium halodurans (strain ATCC BAA-125 / DSM 18197 / FERM 7344 / JCM 9153 / C-125) (Bacillus halodurans) protein is Imidazoleglycerol-phosphate dehydratase.